Reading from the N-terminus, the 148-residue chain is Urease accessory protein UreE (148 aa).

Belongs to the UreE family.

It is found in the cytoplasm. Involved in urease metallocenter assembly. Binds nickel. Probably functions as a nickel donor during metallocenter assembly. The protein is Urease accessory protein UreE of Aliarcobacter butzleri (strain RM4018) (Arcobacter butzleri).